Reading from the N-terminus, the 1013-residue chain is Retinoblastoma-related protein 1 (1013 aa).

The domain A stretch occupies residues 406–607 (TPVSTAMTTA…EKGSSMYNSL (202 aa)). The interval 406–858 (TPVSTAMTTA…NEIFIPAVKP (453 aa)) is pocket. The interval 608–727 (IVARPSLALE…PGGGGETCAE (120 aa)) is spacer. Residues 728 to 858 (TGINIFFTKI…NEIFIPAVKP (131 aa)) are domain B. Ser885 and Ser898 each carry phosphoserine. The tract at residues 979–1013 (VANSLNLQNQNQNQNGSDASSSGGAAPLKTEPTDS) is disordered. Positions 980 to 1004 (ANSLNLQNQNQNQNGSDASSSGGAA) are enriched in low complexity.

The protein belongs to the retinoblastoma protein (RB) family. As to quaternary structure, interacts with the begomovirus replication-associated protein (Rep), the nanovirus Clink protein, the mastrevirus RepA protein, E2FA, E2FB and E2FC. Interacts with MSI1 through its Domain A. Interacts with ATPK1/S6K1. Interacts with SCR. Interacts with HAT2. Interacts with FAMA. Interacts with MYB124 and MYB88. Component of a DREAM-like complex which modulates a variety of developmentally regulated genes and of the mitotic genes in proliferating and differentiated cells. Associates with MYB3R3 in both earlier and later stages of leaves development. Interacts with MYB3R4 only at early stages of leaves development. Highly phosphorylated by CDKA-1 during G1 to S phase transition. Once hyper-phosphorylated, becomes inactive and unable to interact with E2F. In terms of processing, ubiquitinated. Subject to proteasome-dependent degradation during sucrose starvation. Expressed in actively dividing cells. Detected in the shoot apical meristem, in young leaf primordia and in both sporophytic tissue and the megagametophyte.

It is found in the nucleus. Functionally, key regulator of entry into cell division. Acts as a transcription repressor of E2F target genes, whose activity is required for progress from the G1 to the S phase of the cell cycle. Hyperphosphorylation by CDKA-1 prevents the binding to E2F transcription factors, allowing G1 to S phase transition to operate. Forms a stable complex with E2FA that functions in maintaining cell proliferation through repression of cell differentiation. Plays a central role in the mechanism controlling meristem cell differentiation, cell fate establishment and cell fate maintenance during organogenesis and gametogenesis. Required during lateral organ production. Also involved in controlling asymmetric divisions of stem cells in different stem cell niches. Acts as a negative regulator of cell proliferation during leaf and gametophytes development. At later stages of development, restricts the progression through additional endocycles. In the leaf, plays a role in the control of the mesophyll differentiation. Another role is its implication in the regulation of imprinted genes. Acts together with MSI1 to repress the expression of MET1 during gametogenesis. This in turn activates expression of the imprinted genes FIS2 and FWA. Regulates many genes of the polycomb repressive complex 2 (PRC2). Plays an important role in meiosis affecting different aspects of this complex process. Functions as a positive regulator of the developmental switch from embryonic heterotrophic growth to autotrophic growth. Interaction with mastrevirus RepA or nanovirus Clink protein disrupts the RBR/E2F interaction and releases the transcription of replicative enzymes needed by the virus by increasing the E2F DNA-binding activity. This chain is Retinoblastoma-related protein 1 (RBR1), found in Arabidopsis thaliana (Mouse-ear cress).